Reading from the N-terminus, the 700-residue chain is Acyl-coenzyme A oxidase 3 (700 aa).

The protein belongs to the acyl-CoA oxidase family. Heteropentamer composed of five different subunits. FAD serves as cofactor.

It localises to the peroxisome. The catalysed reaction is a 2,3-saturated acyl-CoA + O2 = a (2E)-enoyl-CoA + H2O2. Its pathway is lipid metabolism; peroxisomal fatty acid beta-oxidation. In terms of biological role, oxidizes aliphatic acyl-CoA substrates of different chain lengths such as hexanoyl-CoA, decanoyl-CoA and myristoyl-CoA as well as aromatic/heterocyclic ring-substituted chromogenic substrates, such as furylpropionyl-CoA. Of the above substrates, the efficiency of the enzyme, exhibits the following order: decanoyl-CoA &gt; myristoyl-CoA &gt; hexanoyl-CoA &gt; furyl-propionyl-CoA. This is Acyl-coenzyme A oxidase 3 (POX3) from Yarrowia lipolytica (strain CLIB 122 / E 150) (Yeast).